A 751-amino-acid chain; its full sequence is Glutathione biosynthesis bifunctional protein GshAB (751 aa).

The tract at residues 1–336 (MELDAVGKAI…QADQLTRQVL (336 aa)) is glutamate--cysteine ligase.

In the N-terminal section; belongs to the glutamate--cysteine ligase type 1 family. Type 2 subfamily. As to quaternary structure, monomer.

The catalysed reaction is L-cysteine + L-glutamate + ATP = gamma-L-glutamyl-L-cysteine + ADP + phosphate + H(+). It catalyses the reaction gamma-L-glutamyl-L-cysteine + glycine + ATP = glutathione + ADP + phosphate + H(+). Its pathway is sulfur metabolism; glutathione biosynthesis; glutathione from L-cysteine and L-glutamate: step 1/2. It participates in sulfur metabolism; glutathione biosynthesis; glutathione from L-cysteine and L-glutamate: step 2/2. Functionally, synthesizes glutathione from L-glutamate and L-cysteine via gamma-L-glutamyl-L-cysteine. In Lactiplantibacillus plantarum (strain ATCC BAA-793 / NCIMB 8826 / WCFS1) (Lactobacillus plantarum), this protein is Glutathione biosynthesis bifunctional protein GshAB (gshAB).